The chain runs to 391 residues: S-adenosylmethionine synthase (391 aa).

His14 contributes to the ATP binding site. Residue Asp16 coordinates Mg(2+). Glu42 provides a ligand contact to K(+). 2 residues coordinate L-methionine: Glu55 and Gln98. Positions 98–108 (QSVDIAMGVDE) are flexible loop. Residues 172–174 (DGK), 238–239 (RF), Asp247, 253–254 (RK), Ala270, and Lys274 each bind ATP. Asp247 is an L-methionine binding site. Position 278 (Lys278) interacts with L-methionine.

The protein belongs to the AdoMet synthase family. Homotetramer; dimer of dimers. It depends on Mg(2+) as a cofactor. Requires K(+) as cofactor.

It localises to the cytoplasm. The enzyme catalyses L-methionine + ATP + H2O = S-adenosyl-L-methionine + phosphate + diphosphate. It functions in the pathway amino-acid biosynthesis; S-adenosyl-L-methionine biosynthesis; S-adenosyl-L-methionine from L-methionine: step 1/1. Its function is as follows. Catalyzes the formation of S-adenosylmethionine (AdoMet) from methionine and ATP. The overall synthetic reaction is composed of two sequential steps, AdoMet formation and the subsequent tripolyphosphate hydrolysis which occurs prior to release of AdoMet from the enzyme. The chain is S-adenosylmethionine synthase from Clostridium botulinum (strain Kyoto / Type A2).